Consider the following 99-residue polypeptide: MLKPSIDSLLKEVPSKYSLVILASKRAHELDEGVQPTVESFDSVKSVGRALEEIEAGTVISDPNPEEKRERLRIEREERKRQREQEQKELENRLRDEKN.

Residues 55 to 99 (EAGTVISDPNPEEKRERLRIEREERKRQREQEQKELENRLRDEKN) form a disordered region. Over residues 65-99 (PEEKRERLRIEREERKRQREQEQKELENRLRDEKN) the composition is skewed to basic and acidic residues.

It belongs to the RNA polymerase subunit omega family. The RNAP catalytic core consists of 2 alpha, 1 beta, 1 beta' and 1 omega subunit. When a sigma factor is associated with the core the holoenzyme is formed, which can initiate transcription.

The catalysed reaction is RNA(n) + a ribonucleoside 5'-triphosphate = RNA(n+1) + diphosphate. Its function is as follows. Promotes RNA polymerase assembly. Latches the N- and C-terminal regions of the beta' subunit thereby facilitating its interaction with the beta and alpha subunits. The chain is DNA-directed RNA polymerase subunit omega from Enterococcus faecalis (strain ATCC 700802 / V583).